Reading from the N-terminus, the 349-residue chain is S-adenosylmethionine:tRNA ribosyltransferase-isomerase (349 aa).

The protein belongs to the QueA family. As to quaternary structure, monomer.

It is found in the cytoplasm. The enzyme catalyses 7-aminomethyl-7-carbaguanosine(34) in tRNA + S-adenosyl-L-methionine = epoxyqueuosine(34) in tRNA + adenine + L-methionine + 2 H(+). It participates in tRNA modification; tRNA-queuosine biosynthesis. Its function is as follows. Transfers and isomerizes the ribose moiety from AdoMet to the 7-aminomethyl group of 7-deazaguanine (preQ1-tRNA) to give epoxyqueuosine (oQ-tRNA). In Azotobacter vinelandii (strain DJ / ATCC BAA-1303), this protein is S-adenosylmethionine:tRNA ribosyltransferase-isomerase.